The sequence spans 552 residues: Serine protease 53 (552 aa).

The N-terminal stretch at 1 to 23 (MRQSWRPELLIVGAVVVIEGLQA) is a signal peptide. Peptidase S1 domains lie at 24–273 (AQRA…AHVH) and 294–525 (VACG…NLDW). A disordered region spans residues 27-46 (ACGQRGPGPPEPQEGNTLPG). Cys62 and Cys78 form a disulfide bridge. Active-site charge relay system residues include His77 and Asp128. Disulfide bonds link Cys158–Cys230, Cys187–Cys209, Cys220–Cys249, and Cys326–Cys342. Catalysis depends on charge relay system residues Ser224, His341, and Asp382. Intrachain disulfides connect Cys443–Cys463 and Cys473–Cys501. The active-site Charge relay system is the Ser477.

It belongs to the peptidase S1 family.

It localises to the secreted. Its function is as follows. In vitro can degrade the fibrinogen alpha chain of as well as pro-urokinase-type plasminogen activator. The sequence is that of Serine protease 53 (Prss53) from Mus musculus (Mouse).